An 853-amino-acid polypeptide reads, in one-letter code: DNA mismatch repair protein MutS (853 aa).

614–621 contacts ATP; it reads GPNMGGKS.

Belongs to the DNA mismatch repair MutS family.

Functionally, this protein is involved in the repair of mismatches in DNA. It is possible that it carries out the mismatch recognition step. This protein has a weak ATPase activity. In Escherichia coli O127:H6 (strain E2348/69 / EPEC), this protein is DNA mismatch repair protein MutS.